The following is a 97-amino-acid chain: UPF0235 protein AZOSEA09540 (97 aa).

It belongs to the UPF0235 family.

The polypeptide is UPF0235 protein AZOSEA09540 (Aromatoleum aromaticum (strain DSM 19018 / LMG 30748 / EbN1) (Azoarcus sp. (strain EbN1))).